The primary structure comprises 145 residues: D-aminoacyl-tRNA deacylase (145 aa).

Positions 137–138 (GP) match the Gly-cisPro motif, important for rejection of L-amino acids motif.

It belongs to the DTD family. As to quaternary structure, homodimer.

It localises to the cytoplasm. It catalyses the reaction glycyl-tRNA(Ala) + H2O = tRNA(Ala) + glycine + H(+). The catalysed reaction is a D-aminoacyl-tRNA + H2O = a tRNA + a D-alpha-amino acid + H(+). An aminoacyl-tRNA editing enzyme that deacylates mischarged D-aminoacyl-tRNAs. Also deacylates mischarged glycyl-tRNA(Ala), protecting cells against glycine mischarging by AlaRS. Acts via tRNA-based rather than protein-based catalysis; rejects L-amino acids rather than detecting D-amino acids in the active site. By recycling D-aminoacyl-tRNA to D-amino acids and free tRNA molecules, this enzyme counteracts the toxicity associated with the formation of D-aminoacyl-tRNA entities in vivo and helps enforce protein L-homochirality. The polypeptide is D-aminoacyl-tRNA deacylase (Streptomyces avermitilis (strain ATCC 31267 / DSM 46492 / JCM 5070 / NBRC 14893 / NCIMB 12804 / NRRL 8165 / MA-4680)).